We begin with the raw amino-acid sequence, 231 residues long: Small ribosomal subunit protein uS2 (231 aa).

The protein belongs to the universal ribosomal protein uS2 family.

In Blochmanniella floridana, this protein is Small ribosomal subunit protein uS2.